A 94-amino-acid polypeptide reads, in one-letter code: Small ubiquitin-related modifier 3 (94 aa).

A Glycyl lysine isopeptide (Lys-Gly) (interchain with G-Cter in SUMO) cross-link involves residue Lys11. The region spanning 15–92 (DHINLKVAGQ…IDVFQQQTGG (78 aa)) is the Ubiquitin-like domain. Gly92 participates in a covalent cross-link: Glycyl lysine isopeptide (Gly-Lys) (interchain with K-? in acceptor proteins). The propeptide occupies 93 to 94 (VC).

Belongs to the ubiquitin family. SUMO subfamily. As to quaternary structure, interacts with sae2 and ube2i. Covalently attached to a number of proteins. In terms of processing, polymeric chains can be formed through Lys-11 cross-linking. Cleavage of precursor form by a sentrin-specific protease is necessary for function.

It localises to the cytoplasm. The protein resides in the nucleus. The protein localises to the PML body. In terms of biological role, ubiquitin-like protein which can be covalently attached to target lysines either as a monomer or as a lysine-linked polymer. Does not seem to be involved in protein degradation and may function as an antagonist of ubiquitin in the degradation process. Plays a role in a number of cellular processes such as nuclear transport, DNA replication and repair, mitosis and signal transduction. Covalent attachment to its substrates requires prior activation by the E1 complex sae1-sae2 and linkage to the E2 enzyme ube2i. The polypeptide is Small ubiquitin-related modifier 3 (sumo3) (Xenopus laevis (African clawed frog)).